A 205-amino-acid polypeptide reads, in one-letter code: Small ribosomal subunit protein uS5 (205 aa).

The region spanning 49–112 is the S5 DRBM domain; the sequence is LVDEVLDINM…VSAKINLVKV (64 aa).

It belongs to the universal ribosomal protein uS5 family. Part of the 30S ribosomal subunit. Contacts protein S4.

In terms of biological role, with S4 and S12 plays an important role in translational accuracy. The sequence is that of Small ribosomal subunit protein uS5 from Methanospirillum hungatei JF-1 (strain ATCC 27890 / DSM 864 / NBRC 100397 / JF-1).